The sequence spans 167 residues: NAD(P)H-quinone oxidoreductase subunit I, chloroplastic (167 aa).

4Fe-4S ferredoxin-type domains lie at 55–84 (GRIHFEFDKCIACEVCVRVCPINLPVVDWI) and 95–124 (KNYSIDFGVCIFCGNCVEYCPTNCLSMTEE). 8 residues coordinate [4Fe-4S] cluster: C64, C67, C70, C74, C104, C107, C110, and C114.

Belongs to the complex I 23 kDa subunit family. As to quaternary structure, NDH is composed of at least 16 different subunits, 5 of which are encoded in the nucleus. [4Fe-4S] cluster is required as a cofactor.

It localises to the plastid. The protein resides in the chloroplast thylakoid membrane. The catalysed reaction is a plastoquinone + NADH + (n+1) H(+)(in) = a plastoquinol + NAD(+) + n H(+)(out). The enzyme catalyses a plastoquinone + NADPH + (n+1) H(+)(in) = a plastoquinol + NADP(+) + n H(+)(out). Its function is as follows. NDH shuttles electrons from NAD(P)H:plastoquinone, via FMN and iron-sulfur (Fe-S) centers, to quinones in the photosynthetic chain and possibly in a chloroplast respiratory chain. The immediate electron acceptor for the enzyme in this species is believed to be plastoquinone. Couples the redox reaction to proton translocation, and thus conserves the redox energy in a proton gradient. This chain is NAD(P)H-quinone oxidoreductase subunit I, chloroplastic, found in Adiantum capillus-veneris (Maidenhair fern).